We begin with the raw amino-acid sequence, 455 residues long: Protein YmfN (455 aa).

It belongs to the phage terminase family.

This is Protein YmfN (ymfN) from Escherichia coli (strain K12).